The sequence spans 100 residues: Large ribosomal subunit protein uL23 (100 aa).

The protein belongs to the universal ribosomal protein uL23 family. In terms of assembly, part of the 50S ribosomal subunit. Contacts protein L29, and trigger factor when it is bound to the ribosome.

Its function is as follows. One of the early assembly proteins it binds 23S rRNA. One of the proteins that surrounds the polypeptide exit tunnel on the outside of the ribosome. Forms the main docking site for trigger factor binding to the ribosome. This chain is Large ribosomal subunit protein uL23, found in Shewanella frigidimarina (strain NCIMB 400).